The primary structure comprises 778 residues: MNILRPPTSSSSSSFPPYPKPVSLTPPVSFTLIHNPINLCSINPPFTNAGRPIFQRSASGTANSSAEDLSSFLGSPSEAYSTHNDQELLFLLRNRKTDEAWAKYVQSTHLPGPTCLSRLVSQLSYQSKPESLTRAQSILTRLRNERQLHRLDANSLGLLAMAAAKSGQTLYAVSVIKSMIRSGYLPHVKAWTAAVASLSASGDDGPEESIKLFIAITRRVKRFGDQSLVGQSRPDTAAFNAVLNACANLGDTDKYWKLFEEMSEWDCEPDVLTYNVMIKLCARVGRKELIVFVLERIIDKGIKVCMTTMHSLVAAYVGFGDLRTAERIVQAMREKRRDLCKVLRECNAEDLKEKEEEEAEDDEDAFEDDEDSGYSARDEVSEEGVVDVFKKLLPNSVDPSGEPPLLPKVFAPDSRIYTTLMKGYMKNGRVADTARMLEAMRRQDDRNSHPDEVTYTTVVSAFVNAGLMDRARQVLAEMARMGVPANRITYNVLLKGYCKQLQIDRAEDLLREMTEDAGIEPDVVSYNIIIDGCILIDDSAGALAFFNEMRTRGIAPTKISYTTLMKAFAMSGQPKLANRVFDEMMNDPRVKVDLIAWNMLVEGYCRLGLIEDAQRVVSRMKENGFYPNVATYGSLANGVSQARKPGDALLLWKEIKERCAVKKKEAPSDSSSDPAPPMLKPDEGLLDTLADICVRAAFFKKALEIIACMEENGIPPNKTKYKKIYVEMHSRMFTSKHASQARIDRRVERKRAAEAFKFWLGLPNSYYGSEWKLGPRED.

The transit peptide at 1–65 (MNILRPPTSS…RSASGTANSS (65 aa)) directs the protein to the chloroplast. PPR repeat units lie at residues 235-269 (DTAAFNAVLNACANLGDTDKYWKLFEEMSEWDCEP), 270-304 (DVLTYNVMIKLCARVGRKELIVFVLERIIDKGIKV), and 305-339 (CMTTMHSLVAAYVGFGDLRTAERIVQAMREKRRDL). The disordered stretch occupies residues 351–381 (LKEKEEEEAEDDEDAFEDDEDSGYSARDEVS). Acidic residues predominate over residues 355 to 372 (EEEEAEDDEDAFEDDEDS). PPR repeat units follow at residues 413-443 (DSRIYTTLMKGYMKNGRVADTARMLEAMRRQ), 451-485 (DEVTYTTVVSAFVNAGLMDRARQVLAEMARMGVPA), 486-521 (NRITYNVLLKGYCKQLQIDRAEDLLREMTEDAGIEP), 522-556 (DVVSYNIIIDGCILIDDSAGALAFFNEMRTRGIAP), 557-587 (TKISYTTLMKAFAMSGQPKLANRVFDEMMND), 593-627 (DLIAWNMLVEGYCRLGLIEDAQRVVSRMKENGFYP), and 628-658 (NVATYGSLANGVSQARKPGDALLLWKEIKER).

It belongs to the PPR family. P subfamily.

It is found in the plastid. It localises to the chloroplast stroma. In terms of biological role, involved in the processing of polycistronic chloroplast psbB-psbT-psbH-petB-petD transcript. Could bind RNA. This Arabidopsis thaliana (Mouse-ear cress) protein is Pentatricopeptide repeat-containing protein At3g09650, chloroplastic (HCF152).